Consider the following 220-residue polypeptide: Cytidylate kinase (220 aa).

9–17 (GPAASGKST) is a binding site for ATP.

This sequence belongs to the cytidylate kinase family. Type 1 subfamily.

It localises to the cytoplasm. The enzyme catalyses CMP + ATP = CDP + ADP. It carries out the reaction dCMP + ATP = dCDP + ADP. The polypeptide is Cytidylate kinase (Thermotoga sp. (strain RQ2)).